The following is a 415-amino-acid chain: Serine hydroxymethyltransferase (415 aa).

(6S)-5,6,7,8-tetrahydrofolate-binding positions include Leu117 and Gly121–Leu123. Lys226 bears the N6-(pyridoxal phosphate)lysine mark.

This sequence belongs to the SHMT family. Homodimer. It depends on pyridoxal 5'-phosphate as a cofactor.

The protein resides in the cytoplasm. It carries out the reaction (6R)-5,10-methylene-5,6,7,8-tetrahydrofolate + glycine + H2O = (6S)-5,6,7,8-tetrahydrofolate + L-serine. It functions in the pathway one-carbon metabolism; tetrahydrofolate interconversion. The protein operates within amino-acid biosynthesis; glycine biosynthesis; glycine from L-serine: step 1/1. Catalyzes the reversible interconversion of serine and glycine with tetrahydrofolate (THF) serving as the one-carbon carrier. This reaction serves as the major source of one-carbon groups required for the biosynthesis of purines, thymidylate, methionine, and other important biomolecules. Also exhibits THF-independent aldolase activity toward beta-hydroxyamino acids, producing glycine and aldehydes, via a retro-aldol mechanism. The sequence is that of Serine hydroxymethyltransferase from Leptospira interrogans serogroup Icterohaemorrhagiae serovar copenhageni (strain Fiocruz L1-130).